Consider the following 1304-residue polypeptide: Splicing factor 3B subunit 1 (1304 aa).

Disordered regions lie at residues 100–119 (QYDPFAEHRPPKIADREDEY) and 124–148 (RTMIISPERLDPFADGGKTPDPKMN). Positions 104-119 (FAEHRPPKIADREDEY) are enriched in basic and acidic residues. Thr-125 bears the Phosphothreonine mark. Position 129 is a phosphoserine (Ser-129). Position 141 is an N6-acetyllysine (Lys-141). The residue at position 142 (Thr-142) is a Phosphothreonine. Citrulline is present on Arg-157. Residues 173-360 (AEKAKAGELK…PVLTPGKTPI (188 aa)) are disordered. The tract at residues 190 to 342 (SQPPSKRKRR…KRKSRWDETP (153 aa)) is U2AF homology region; mediates interaction with RBM39. The residue at position 194 (Ser-194) is a Phosphoserine. A phosphothreonine mark is found at Thr-203, Thr-207, and Thr-211. N6-acetyllysine; alternate is present on Lys-214. Lys-214 participates in a covalent cross-link: Glycyl lysine isopeptide (Lys-Gly) (interchain with G-Cter in SUMO2); alternate. Phosphothreonine occurs at positions 223 and 227. The interval 223-491 (TPGHTPSLRW…VDESTLSPEE (269 aa)) is interaction with PPP1R8. Position 229 is a phosphoserine (Ser-229). Over residues 231-241 (RWDETPGRAKG) the composition is skewed to basic and acidic residues. Thr-235, Thr-244, Thr-248, Thr-257, Thr-261, Thr-267, Thr-273, and Thr-278 each carry phosphothreonine. Residue Ser-287 is modified to Phosphoserine. Residues 291–304 (NRWDETPKTERDTP) are compositionally biased toward basic and acidic residues. Residues Thr-296, Thr-299, Thr-303, and Thr-313 each carry the phosphothreonine modification. Position 322 is a phosphoserine (Ser-322). Thr-326 and Thr-328 each carry phosphothreonine. Phosphoserine is present on Ser-332. Thr-341 is modified (phosphothreonine). Positions 342–352 (PASQMGGSTPV) are enriched in polar residues. Phosphoserine is present on residues Ser-344 and Ser-349. Phosphothreonine is present on residues Thr-350 and Thr-354. The residue at position 400 (Ser-400) is a Phosphoserine. Residue Lys-413 forms a Glycyl lysine isopeptide (Lys-Gly) (interchain with G-Cter in SUMO2); alternate linkage. Lys-413 participates in a covalent cross-link: Glycyl lysine isopeptide (Lys-Gly) (interchain with G-Cter in SUMO1); alternate. Thr-426 bears the Phosphothreonine mark. Lys-430 is covalently cross-linked (Glycyl lysine isopeptide (Lys-Gly) (interchain with G-Cter in SUMO2)). The residue at position 434 (Thr-434) is a Phosphothreonine; by DYRK1A. The residue at position 436 (Thr-436) is a Phosphothreonine. Residue Ser-488 is modified to Phosphoserine. HEAT repeat units follow at residues 529-568 (GPLFNQILPLLMSPTLEDQERHLLVKVIDRILYKLDDLVR), 569-603 (PYVHKILVVIEPLLIDEDYYARVEGREIISNLAKA), 604-641 (AGLATMISTMRPDIDNMDEYVRNTTARAFAVVASALGI), 643-677 (SLLPFLKAVCKSKKSWQARHTGIKIVQQIAILMGC), 680-718 (LPHLRSLVEIIEHGLVDEQQKVRTISALAIAALAEAATP), 763-801 (NYYTREVMLILIREFQSPDEEMKKIVLKVVKQCCGTDGV), 843-881 (KVGAAEIISRIVDDLKDEAEQYRKMVMETIEKIMGNLGA), 1010-1048 (TPPIKDLLPRLTPILKNRHEKVQENCIDLVGRIADRGAE), 1052-1090 (AREWMRICFELLELLKAHKKAIRRATVNTFGYIAKAIGP), 1122-1160 (TCSPFTVLPALMNEYRVPELNVQNGVLKSLSFLFEYIGE), and 1163-1201 (KDYIYAVTPLLEDALMDRDLVHRQTASAVVQHMSLGVYG). The interval 529-568 (GPLFNQILPLLMSPTLEDQERHLLVKVIDRILYKLDDLVR) is interaction with SF3B14. The interaction with PHF5A stretch occupies residues 547-550 (QERH). An N6-acetyllysine mark is found at Lys-554 and Lys-562. Positions 1156-1157 (EY) are interaction with PHF5A. The interval 1248-1304 (QYCLQGLFHPARKVRDVYWKIYNSIYIGSQDALIAHYPRIYNDDKNTYIRYELDYIL) is interaction with SF3B3 and SF3B5.

It belongs to the SF3B1 family. In terms of assembly, component of the 17S U2 SnRNP complex, a ribonucleoprotein complex that contains small nuclear RNA (snRNA) U2 and a number of specific proteins. Part of the SF3B subcomplex of the 17S U2 SnRNP complex. SF3B associates with the splicing subcomplex SF3A and a 12S RNA unit to form the U2 small nuclear ribonucleoproteins complex (U2 snRNP). Within the SF3B complex, interacts directly (via HEAT domain) with SF3B3, SF3B5, SF3B6 and (via HEAT domain) with PHF5A. The SF3B subcomplex interacts with U2AF2. Identified in the spliceosome C complex. Component of the minor (U12-type spliceosome) spliceosome. Within the minor spliceosome complex, interacts with SCNM1 and CRIPT. Component of the B-WICH complex, at least composed of SMARCA5/SNF2H, BAZ1B/WSTF, SF3B1, DEK, MYO1C, ERCC6, MYBBP1A and DDX21. Phosphorylated form interacts with PPP1R8. Interacts with PQBP1. Interacts with RBM17. Interacts with RBM39. Interacts with SETX. Interacts with RBM15. Interacts with USH1G. Interacts with SDE2. Interacts with U2AF1. Interacts with CACTIN. Interacts with ZRSR1. Interacts with CYREN. Post-translationally, phosphorylated. Phosphorylation occurs concomitantly with the splicing catalytic steps. Phosphorylation on Thr-244, Thr-248 and Thr-313 by cyclin-dependent kinases promotes interaction with PPP1R8 during mitosis. Citrullinated by PADI4.

The protein resides in the nucleus. It localises to the nucleus speckle. Its function is as follows. Component of the 17S U2 SnRNP complex of the spliceosome, a large ribonucleoprotein complex that removes introns from transcribed pre-mRNAs. The 17S U2 SnRNP complex (1) directly participates in early spliceosome assembly and (2) mediates recognition of the intron branch site during pre-mRNA splicing by promoting the selection of the pre-mRNA branch-site adenosine, the nucleophile for the first step of splicing. Within the 17S U2 SnRNP complex, SF3B1 is part of the SF3B subcomplex, which is required for 'A' complex assembly formed by the stable binding of U2 snRNP to the branchpoint sequence in pre-mRNA. Sequence independent binding of SF3A and SF3B subcomplexes upstream of the branch site is essential, it may anchor U2 snRNP to the pre-mRNA. May also be involved in the assembly of the 'E' complex. Also acts as a component of the minor spliceosome, which is involved in the splicing of U12-type introns in pre-mRNAs. Together with other U2 snRNP complex components may also play a role in the selective processing of microRNAs (miRNAs) from the long primary miRNA transcript, pri-miR-17-92. This chain is Splicing factor 3B subunit 1, found in Homo sapiens (Human).